The chain runs to 296 residues: Glycine--tRNA ligase alpha subunit (296 aa).

The protein belongs to the class-II aminoacyl-tRNA synthetase family. As to quaternary structure, tetramer of two alpha and two beta subunits.

The protein localises to the cytoplasm. The enzyme catalyses tRNA(Gly) + glycine + ATP = glycyl-tRNA(Gly) + AMP + diphosphate. This is Glycine--tRNA ligase alpha subunit from Francisella philomiragia subsp. philomiragia (strain ATCC 25017 / CCUG 19701 / FSC 153 / O#319-036).